The primary structure comprises 104 residues: Replication factor A protein 3 (104 aa).

This sequence belongs to the replication factor A protein 3 family. Component of the heterotrimeric canonical replication protein A complex (RPA).

It localises to the nucleus. As part of the replication protein A (RPA/RP-A), a single-stranded DNA-binding heterotrimeric complex, may play an essential role in DNA replication, recombination and repair. Binds and stabilizes single-stranded DNA intermediates, preventing complementary DNA reannealing and recruiting different proteins involved in DNA metabolism. This is Replication factor A protein 3 (ssb3) from Schizosaccharomyces pombe (strain 972 / ATCC 24843) (Fission yeast).